Consider the following 394-residue polypeptide: Dimethyladenosine transferase 2, mitochondrial (394 aa).

A mitochondrion-targeting transit peptide spans 1-19 (MWVPGAGIPSRLTLSAFTR). Residues V75, E123, and D149 each contribute to the S-adenosyl-L-methionine site. The tract at residues 326–327 (KR) is DNA-binding.

This sequence belongs to the class I-like SAM-binding methyltransferase superfamily. rRNA adenine N(6)-methyltransferase family. KsgA subfamily. In terms of assembly, homodimer. Component of the mitochondrial transcription initiation complex, composed at least of TFB2M, TFAM and POLRMT. In this complex TFAM recruits POLRMT to the promoter whereas TFB2M induces structural changes in POLRMT to enable promoter opening and trapping of the DNA non-template strand. Interacts with mitochondrial RNA polymerase POLRMT. Interacts with TFAM.

Its subcellular location is the mitochondrion. It carries out the reaction adenosine in rRNA + S-adenosyl-L-methionine = N(6)-methyladenosine in rRNA + S-adenosyl-L-homocysteine + H(+). Functionally, S-adenosyl-L-methionine-dependent rRNA methyltransferase which may methylate two specific adjacent adenosines in the loop of a conserved hairpin near the 3'-end of 12S mitochondrial rRNA. Component of the mitochondrial transcription initiation complex, composed at least of TFB2M, TFAM and POLRMT that is required for basal transcription of mitochondrial DNA. In this complex TFAM recruits POLRMT to a specific promoter whereas TFB2M induces structural changes in POLRMT to enable promoter opening and trapping of the DNA non-template strand. Stimulates transcription independently of the methyltransferase activity. This Bos taurus (Bovine) protein is Dimethyladenosine transferase 2, mitochondrial.